Consider the following 215-residue polypeptide: MDAAFHEALARGIEALGLPVDAAARALLERYADRLLAWNRKVNLTAITAPAELAEKHLVDSLVLLPFVAGARTLLDVGSGAGLPGIPLACVRRDLSVTCCDGVAKKIAFVKAVSAELDLRVRGVAVRAEGHPEREGLPRADAVVSRALADPDRWVPLGARYLADGGTLLAMLGREVDRAALDAAGAAEGLTLVGLDVYELPVSHAARAVARWQRK.

S-adenosyl-L-methionine-binding positions include G78, L83, 128–129 (AE), and R146.

This sequence belongs to the methyltransferase superfamily. RNA methyltransferase RsmG family.

Its subcellular location is the cytoplasm. The catalysed reaction is guanosine(527) in 16S rRNA + S-adenosyl-L-methionine = N(7)-methylguanosine(527) in 16S rRNA + S-adenosyl-L-homocysteine. Specifically methylates the N7 position of guanine in position 527 of 16S rRNA. The sequence is that of Ribosomal RNA small subunit methyltransferase G from Anaeromyxobacter dehalogenans (strain 2CP-C).